Consider the following 415-residue polypeptide: Lipoyl synthase, mitochondrial (415 aa).

Residues 1–32 (MAASTNRLRFLYSSARTVPQTGSITPISRRTY) constitute a mitochondrion transit peptide. The span at 22 to 32 (GSITPISRRTY) shows a compositional bias: polar residues. The interval 22–53 (GSITPISRRTYATTEPSPSATGAPATARKRTN) is disordered. The segment covering 33 to 47 (ATTEPSPSATGAPAT) has biased composition (low complexity). The [4Fe-4S] cluster site is built by cysteine 132, cysteine 137, cysteine 143, cysteine 163, cysteine 167, cysteine 170, and serine 378. One can recognise a Radical SAM core domain in the interval 146-367 (GSDKSAATAT…RQRALDMGFL (222 aa)). Positions 395–415 (AAGTAGESVTDSKAAVDEATR) are disordered.

It belongs to the radical SAM superfamily. Lipoyl synthase family. It depends on [4Fe-4S] cluster as a cofactor.

Its subcellular location is the mitochondrion. It catalyses the reaction [[Fe-S] cluster scaffold protein carrying a second [4Fe-4S](2+) cluster] + N(6)-octanoyl-L-lysyl-[protein] + 2 oxidized [2Fe-2S]-[ferredoxin] + 2 S-adenosyl-L-methionine + 4 H(+) = [[Fe-S] cluster scaffold protein] + N(6)-[(R)-dihydrolipoyl]-L-lysyl-[protein] + 4 Fe(3+) + 2 hydrogen sulfide + 2 5'-deoxyadenosine + 2 L-methionine + 2 reduced [2Fe-2S]-[ferredoxin]. The protein operates within protein modification; protein lipoylation via endogenous pathway; protein N(6)-(lipoyl)lysine from octanoyl-[acyl-carrier-protein]: step 2/2. Functionally, catalyzes the radical-mediated insertion of two sulfur atoms into the C-6 and C-8 positions of the octanoyl moiety bound to the lipoyl domains of lipoate-dependent enzymes, thereby converting the octanoylated domains into lipoylated derivatives. The protein is Lipoyl synthase, mitochondrial of Aspergillus oryzae (strain ATCC 42149 / RIB 40) (Yellow koji mold).